The sequence spans 318 residues: Acetyl-coenzyme A carboxylase carboxyl transferase subunit alpha (318 aa).

Residues 31-292 (DLIKEVSALE…KDAILRQLEL (262 aa)) form the CoA carboxyltransferase C-terminal domain.

The protein belongs to the AccA family. Acetyl-CoA carboxylase is a heterohexamer composed of biotin carboxyl carrier protein (AccB), biotin carboxylase (AccC) and two subunits each of ACCase subunit alpha (AccA) and ACCase subunit beta (AccD).

It is found in the cytoplasm. It carries out the reaction N(6)-carboxybiotinyl-L-lysyl-[protein] + acetyl-CoA = N(6)-biotinyl-L-lysyl-[protein] + malonyl-CoA. Its pathway is lipid metabolism; malonyl-CoA biosynthesis; malonyl-CoA from acetyl-CoA: step 1/1. Component of the acetyl coenzyme A carboxylase (ACC) complex. First, biotin carboxylase catalyzes the carboxylation of biotin on its carrier protein (BCCP) and then the CO(2) group is transferred by the carboxyltransferase to acetyl-CoA to form malonyl-CoA. This is Acetyl-coenzyme A carboxylase carboxyl transferase subunit alpha from Hydrogenovibrio crunogenus (strain DSM 25203 / XCL-2) (Thiomicrospira crunogena).